A 257-amino-acid chain; its full sequence is tRNA pseudouridine synthase A (257 aa).

Asp43 serves as the catalytic Nucleophile. A substrate-binding site is contributed by Tyr94.

The protein belongs to the tRNA pseudouridine synthase TruA family.

The enzyme catalyses uridine(38/39/40) in tRNA = pseudouridine(38/39/40) in tRNA. In terms of biological role, formation of pseudouridine at positions 38, 39 and 40 in the anticodon stem and loop of transfer RNAs. The chain is tRNA pseudouridine synthase A from Pyrobaculum arsenaticum (strain DSM 13514 / JCM 11321 / PZ6).